Consider the following 296-residue polypeptide: MAAATADDEGSAATILKQAIAGDRSLVEAAEAISQQTLLRLACEVRQVGDRQPRFTATSIARVDVAPGCRLRFVLDGSPEDAYVTSEDYFKRCCGQSSYRGFAVAVLTANEDHVHSLAVPPLVLLHRFSLFNPRDLLDFELACLLMYLENCPRSHATPSTFAKVLAWLGVAGRRTSPFERVRCLFLRSCHWVLNTLMFMVYVKPFDDEFVLPHWYMARYLLANNPPPVLSALFCATPTSSSFRLPGPPPRSDCVAYNPAGIMGSCWASEEVRAPLVYWWLSETPKRQTSSLFYQFC.

This sequence belongs to the herpesviridae cytoplasmic envelopment protein 1 family. As to quaternary structure, interacts with UL51; this interaction allows incorporation of UL7 within the virion.

It localises to the virion. It is found in the virion tegument. The protein resides in the host cytoplasm. Its subcellular location is the host Golgi apparatus. Functionally, plays a critical role in cytoplasmic virus egress. Participates in the final step of tegumentation and envelope acquisition within the host cytoplasm. The chain is Cytoplasmic envelopment protein 1 (UL7) from Human herpesvirus 1 (strain 17) (HHV-1).